The sequence spans 1199 residues: Chromosome partition protein Smc (1199 aa).

Residue 32–39 (PNGSGKSN) participates in ATP binding. Residues 192-528 (GVAEFDEKSE…NARIKTLKDM (337 aa)) are a coiled coil. The SMC hinge domain maps to 546-658 (PGVVDIAGNL…VDNLENAKKL (113 aa)). The stretch at 691–1051 (IKVDIDMKKL…YLQLISEVQK (361 aa)) forms a coiled coil.

Belongs to the SMC family. In terms of assembly, homodimer.

The protein localises to the cytoplasm. Its function is as follows. Required for chromosome condensation and partitioning. The chain is Chromosome partition protein Smc from Methanococcus voltae.